The following is a 227-amino-acid chain: Glutathione S-transferase U17 (227 aa).

Residues 4 to 83 (SDVKLIGAWA…YIDDTWSSSG (80 aa)) form the GST N-terminal domain. Residues 14–15 (SP), 40–41 (SK), 54–55 (KI), and 67–68 (ES) each bind glutathione. The 133-residue stretch at 90-222 (DPYDRAMARF…KLAEFAKKIF (133 aa)) folds into the GST C-terminal domain.

The protein belongs to the GST superfamily. Tau family.

Its subcellular location is the cytoplasm. The protein localises to the cytosol. It carries out the reaction RX + glutathione = an S-substituted glutathione + a halide anion + H(+). Its function is as follows. Involved in light signaling, mainly phyA-mediated photomorphogenesis and in the integration of various phytohormone signals to modulate various aspects of plant development by affecting glutathione pools. In vitro, possesses glutathione S-transferase activity toward 1-chloro-2,4-dinitrobenzene (CDNB) and benzyl isothiocyanate (BITC). This Arabidopsis thaliana (Mouse-ear cress) protein is Glutathione S-transferase U17 (GSTU17).